Consider the following 203-residue polypeptide: Urease accessory protein UreG (203 aa).

Residue 11-18 (GPVGSGKT) coordinates GTP.

It belongs to the SIMIBI class G3E GTPase family. UreG subfamily. As to quaternary structure, homodimer. UreD, UreF and UreG form a complex that acts as a GTP-hydrolysis-dependent molecular chaperone, activating the urease apoprotein by helping to assemble the nickel containing metallocenter of UreC. The UreE protein probably delivers the nickel.

The protein localises to the cytoplasm. In terms of biological role, facilitates the functional incorporation of the urease nickel metallocenter. This process requires GTP hydrolysis, probably effectuated by UreG. The protein is Urease accessory protein UreG of Prochlorococcus marinus (strain MIT 9312).